Reading from the N-terminus, the 333-residue chain is 5-formaminoimidazole-4-carboxamide-1-(beta)-D-ribofuranosyl 5'-monophosphate synthetase (333 aa).

Positions 20 and 85 each coordinate 5-amino-1-(5-phospho-beta-D-ribosyl)imidazole-4-carboxamide. Residues R106–E313 enclose the ATP-grasp domain. ATP is bound by residues P136–Y187 and E209. 5-amino-1-(5-phospho-beta-D-ribosyl)imidazole-4-carboxamide is bound at residue N229. The Mg(2+) site is built by E268 and E281.

Belongs to the phosphohexose mutase family. Mg(2+) serves as cofactor. Requires Mn(2+) as cofactor.

The catalysed reaction is 5-amino-1-(5-phospho-beta-D-ribosyl)imidazole-4-carboxamide + formate + ATP = 5-formamido-1-(5-phospho-D-ribosyl)imidazole-4-carboxamide + ADP + phosphate. It functions in the pathway purine metabolism; IMP biosynthesis via de novo pathway; 5-formamido-1-(5-phospho-D-ribosyl)imidazole-4-carboxamide from 5-amino-1-(5-phospho-D-ribosyl)imidazole-4-carboxamide (formate route): step 1/1. Its function is as follows. Catalyzes the ATP- and formate-dependent formylation of 5-aminoimidazole-4-carboxamide-1-beta-d-ribofuranosyl 5'-monophosphate (AICAR) to 5-formaminoimidazole-4-carboxamide-1-beta-d-ribofuranosyl 5'-monophosphate (FAICAR) in the absence of folates. The sequence is that of 5-formaminoimidazole-4-carboxamide-1-(beta)-D-ribofuranosyl 5'-monophosphate synthetase from Pyrobaculum islandicum (strain DSM 4184 / JCM 9189 / GEO3).